The chain runs to 31 residues: Hemocyanin subunit 1 (31 aa).

The protein belongs to the tyrosinase family. Hemocyanin subfamily. As to expression, hemolymph.

It is found in the secreted. It localises to the extracellular space. Hemocyanins are copper-containing oxygen carriers occurring freely dissolved in the hemolymph of many mollusks and arthropods. The polypeptide is Hemocyanin subunit 1 (Homarus americanus (American lobster)).